The following is a 160-amino-acid chain: SsrA-binding protein (160 aa).

A disordered region spans residues 131–160 (KKEYDKRHTERERDSDRELQRAVRTKGKDD).

Belongs to the SmpB family.

The protein localises to the cytoplasm. In terms of biological role, required for rescue of stalled ribosomes mediated by trans-translation. Binds to transfer-messenger RNA (tmRNA), required for stable association of tmRNA with ribosomes. tmRNA and SmpB together mimic tRNA shape, replacing the anticodon stem-loop with SmpB. tmRNA is encoded by the ssrA gene; the 2 termini fold to resemble tRNA(Ala) and it encodes a 'tag peptide', a short internal open reading frame. During trans-translation Ala-aminoacylated tmRNA acts like a tRNA, entering the A-site of stalled ribosomes, displacing the stalled mRNA. The ribosome then switches to translate the ORF on the tmRNA; the nascent peptide is terminated with the 'tag peptide' encoded by the tmRNA and targeted for degradation. The ribosome is freed to recommence translation, which seems to be the essential function of trans-translation. The sequence is that of SsrA-binding protein from Pseudomonas syringae pv. tomato (strain ATCC BAA-871 / DC3000).